The primary structure comprises 463 residues: MTQHFDLIAIGGGSGGLAVAEKAAAFGKRVALIESKALGGTCVNVGCVPKKVMWYASHLAEAVRDAPGFGVQASGGTLDWPRLVAGRDRYIGAINSFWDGYVERLGITRVDGHARFVDAHTIEVEGQRLSADHIVIATGGRPIVPRLPGAELGITSDGFFALQQQPKRVAIIGAGYIGIELAGLLRSFGSEVTVVALEDRLLFQFDPLLSATLAENMHAQGIETHLEFAVAALERDAQGTTLVAQDGTRLEGFDSVIWAVGRAPNTRDLGLEAAGIEVQSNGMVPTDAYQNTNVPGVYALGDITGRDQLTPVAIAAGRRLAERLFDGQSERKLDYDNIPTVVFAHPPLSKVGLSEPEARERLGDVLTVYETSFTPMRYALNEHGPKTAMKLVCAGPEQRVVGVHVIGDGADEMLQGFAVAVKMGATKADFDNTVAIHPGSAEELVTLKEPVRRPGDPLPEGAA.

The Ni(2+) site is built by Thr-2, Gln-3, and His-4. FAD contacts are provided by residues 14 to 15 (SG), Glu-34, and Thr-41. Cys-42 and Cys-47 are joined by a disulfide. FAD is bound by residues Lys-50 and 113–114 (HA). Lys-50 contacts NAD(+). NAD(+)-binding positions include 174 to 180 (AGYIGIE), 197 to 198 (LE), Val-230, and Gly-261. Residues Asp-302 and 308-310 (QLT) contribute to the FAD site. Positions 308 and 341 each coordinate NAD(+). His-437 lines the FAD pocket. His-437 acts as the Proton acceptor in catalysis.

The protein belongs to the class-I pyridine nucleotide-disulfide oxidoreductase family. As to quaternary structure, homodimer. Requires FAD as cofactor.

The catalysed reaction is 2 glutathione amide + NAD(+) = glutathione amide disulfide + NADH + H(+). Catalyzes the reduction of glutathione amide disulfide (GASSAG) to restore glutathione amide (GASH) in the presence of NADH. May play a role in GASH metabolism under anaerobic conditions as a sulfide carrier necessary for cytoplasmic sulfide oxidation. The sequence is that of Glutathione amide reductase from Marichromatium gracile (Chromatium gracile).